Here is a 216-residue protein sequence, read N- to C-terminus: Peroxiredoxin (216 aa).

Residues 2–158 form the Thioredoxin domain; sequence VVIGEKFPEV…ILRLVKALKI (157 aa). Cys46 acts as the Cysteine sulfenic acid (-SOH) intermediate in catalysis. Residue Arg121 coordinates substrate. Cys205 and Cys211 are joined by a disulfide.

Belongs to the peroxiredoxin family. Prx6 subfamily. Homodecamer. Pentamer of dimers that assemble into a ring structure.

The protein resides in the cytoplasm. The enzyme catalyses a hydroperoxide + [thioredoxin]-dithiol = an alcohol + [thioredoxin]-disulfide + H2O. Functionally, thiol-specific peroxidase that catalyzes the reduction of hydrogen peroxide and organic hydroperoxides to water and alcohols, respectively. Plays a role in cell protection against oxidative stress by detoxifying peroxides. The chain is Peroxiredoxin from Pyrococcus abyssi (strain GE5 / Orsay).